A 318-amino-acid chain; its full sequence is DNA-directed RNA polymerase subunit alpha (318 aa).

An alpha N-terminal domain (alpha-NTD) region spans residues 1–232 (MAHQRIVGPT…NLFSPLQNVR (232 aa)). Residues 246–318 (KMTEVLVEEL…HLPKEKFTKD (73 aa)) are alpha C-terminal domain (alpha-CTD).

The protein belongs to the RNA polymerase alpha chain family. In plastids the minimal PEP RNA polymerase catalytic core is composed of four subunits: alpha, beta, beta', and beta''. When a (nuclear-encoded) sigma factor is associated with the core the holoenzyme is formed, which can initiate transcription.

The protein resides in the plastid. The protein localises to the chloroplast. It carries out the reaction RNA(n) + a ribonucleoside 5'-triphosphate = RNA(n+1) + diphosphate. DNA-dependent RNA polymerase catalyzes the transcription of DNA into RNA using the four ribonucleoside triphosphates as substrates. The polypeptide is DNA-directed RNA polymerase subunit alpha (Chlorokybus atmophyticus (Soil alga)).